A 445-amino-acid polypeptide reads, in one-letter code: mRNA cleavage and polyadenylation factor CLP1 (445 aa).

Residues E33 and 131–136 contribute to the ATP site; that span reads SSGKTS.

Belongs to the Clp1 family. Clp1 subfamily. In terms of assembly, component of a pre-mRNA cleavage factor complex. Interacts directly with PCF11.

It localises to the nucleus. In terms of biological role, required for endonucleolytic cleavage during polyadenylation-dependent pre-mRNA 3'-end formation. In Eremothecium gossypii (strain ATCC 10895 / CBS 109.51 / FGSC 9923 / NRRL Y-1056) (Yeast), this protein is mRNA cleavage and polyadenylation factor CLP1.